The primary structure comprises 370 residues: 3-isopropylmalate dehydrogenase (370 aa).

77–90 (GPKWDSVPYEVRPE) is a binding site for NAD(+). Substrate-binding residues include Arg-97, Arg-107, Arg-135, and Asp-226. Residues Asp-226, Asp-250, and Asp-254 each coordinate Mg(2+). 290–302 (GSAPDIAGKGIAN) contacts NAD(+).

The protein belongs to the isocitrate and isopropylmalate dehydrogenases family. LeuB type 1 subfamily. In terms of assembly, homodimer. The cofactor is Mg(2+). Mn(2+) serves as cofactor.

It localises to the cytoplasm. It carries out the reaction (2R,3S)-3-isopropylmalate + NAD(+) = 4-methyl-2-oxopentanoate + CO2 + NADH. The protein operates within amino-acid biosynthesis; L-leucine biosynthesis; L-leucine from 3-methyl-2-oxobutanoate: step 3/4. Functionally, catalyzes the oxidation of 3-carboxy-2-hydroxy-4-methylpentanoate (3-isopropylmalate) to 3-carboxy-4-methyl-2-oxopentanoate. The product decarboxylates to 4-methyl-2 oxopentanoate. The polypeptide is 3-isopropylmalate dehydrogenase (Rhizobium etli (strain ATCC 51251 / DSM 11541 / JCM 21823 / NBRC 15573 / CFN 42)).